A 209-amino-acid polypeptide reads, in one-letter code: Large ribosomal subunit protein uL3 (209 aa).

The interval Lys-124–Val-156 is disordered.

Belongs to the universal ribosomal protein uL3 family. In terms of assembly, part of the 50S ribosomal subunit. Forms a cluster with proteins L14 and L19.

Its function is as follows. One of the primary rRNA binding proteins, it binds directly near the 3'-end of the 23S rRNA, where it nucleates assembly of the 50S subunit. In Pelodictyon phaeoclathratiforme (strain DSM 5477 / BU-1), this protein is Large ribosomal subunit protein uL3.